Reading from the N-terminus, the 1054-residue chain is Topoisomerase 1-associated factor 1 (1054 aa).

Disordered regions lie at residues 522–543 (KADDTGNVEDLESLPGEEHESA), 823–846 (RDDKERRGAGGDKEGSQDAEEDDE), 865–953 (EMFA…TINL), and 968–1054 (VSDG…DDDE). The span at 823–838 (RDDKERRGAGGDKEGS) shows a compositional bias: basic and acidic residues. Residues 877-887 (KTKQKLKRKGT) are compositionally biased toward basic residues. 3 stretches are compositionally biased toward basic and acidic residues: residues 890–901 (STREREKQRDYT), 928–953 (ERDRKFFEKENELREELRKAEPTINL), and 979–1017 (TESHKQYREKVDEDRDDLSHMAERENRQYDFGDEGHDSD).

Belongs to the timeless family. As to quaternary structure, component of the fork protection complex (FPC) consisting of TOF1 and CSM3.

Its subcellular location is the nucleus. Functionally, forms a fork protection complex (FPC) with CSM3 and which is required for chromosome segregation during meiosis and DNA damage repair. FPC coordinates leading and lagging strand synthesis and moves with the replication fork. FPC stabilizes replication forks in a configuration that is recognized by replication checkpoint sensors. This Yarrowia lipolytica (strain CLIB 122 / E 150) (Yeast) protein is Topoisomerase 1-associated factor 1 (TOF1).